The primary structure comprises 137 residues: Large ribosomal subunit protein uL16 (137 aa).

Residues 1–17 (MLQPKRTKFRKTHKGRN) show a composition bias toward basic residues. The tract at residues 1–24 (MLQPKRTKFRKTHKGRNRGLANSG) is disordered.

Belongs to the universal ribosomal protein uL16 family. Part of the 50S ribosomal subunit.

Binds 23S rRNA and is also seen to make contacts with the A and possibly P site tRNAs. The sequence is that of Large ribosomal subunit protein uL16 from Aeromonas hydrophila subsp. hydrophila (strain ATCC 7966 / DSM 30187 / BCRC 13018 / CCUG 14551 / JCM 1027 / KCTC 2358 / NCIMB 9240 / NCTC 8049).